A 161-amino-acid chain; its full sequence is Type IV major fimbrial protein FimA (161 aa).

Positions 1–7 are cleaved as a propeptide — leader sequence; sequence MKSLQKG. N-methylphenylalanine is present on phenylalanine 8. A helical membrane pass occupies residues 8-28; the sequence is FTLIELMIVVAIIGILAAFAI. Cysteine 63 and cysteine 106 form a disulfide bridge.

Belongs to the N-Me-Phe pilin family. The pili are polar flexible filaments of about 5.4 nanometers diameter and 2.5 micrometers average length; they consist of only a single polypeptide chain arranged in a helical configuration of five subunits per turn in the assembled pilus.

It is found in the fimbrium. It localises to the membrane. Functionally, major component of the type IV fimbriae that plays an essential role in twitching motility, natural transformation, and protease secretion. This is Type IV major fimbrial protein FimA (fimA) from Dichelobacter nodosus (Bacteroides nodosus).